A 178-amino-acid polypeptide reads, in one-letter code: NADPH azoreductase (178 aa).

106–111 is an NADP(+) binding site; it reads GGGKGG.

This sequence belongs to the azoreductase type 2 family. In terms of assembly, monomer.

The enzyme catalyses N,N-dimethyl-1,4-phenylenediamine + aniline + 2 NADP(+) = 4-(dimethylamino)azobenzene + 2 NADPH + 2 H(+). Its function is as follows. Catalyzes the reductive cleavage of azo bond in aromatic azo compounds to the corresponding amines. Requires NADPH as an electron donor for its activity. Compounds with paired naphthalene groups coupled with the azo group are good substrates, with the following preference order: Rocceline &gt; Sumifix Black B &gt; Solar Orange. This is NADPH azoreductase (azr) from Bacillus sp. (strain OY1-2).